The following is an 807-amino-acid chain: Probable phosphoketolase (807 aa).

Belongs to the XFP family. Requires thiamine diphosphate as cofactor.

This Mesorhizobium japonicum (strain LMG 29417 / CECT 9101 / MAFF 303099) (Mesorhizobium loti (strain MAFF 303099)) protein is Probable phosphoketolase.